A 24-amino-acid chain; its full sequence is Cytochrome c oxidase subunit 5A-2, mitochondrial (24 aa).

The protein belongs to the cytochrome c oxidase subunit 5A family. As to quaternary structure, component of the cytochrome c oxidase (complex IV, CIV), a multisubunit enzyme composed of 14 subunits. The complex is composed of a catalytic core of 3 subunits MT-CO1, MT-CO2 and MT-CO3, encoded in the mitochondrial DNA, and 11 supernumerary subunits COX4I, COX5A, COX5B, COX6A, COX6B, COX6C, COX7A, COX7B, COX7C, COX8 and NDUFA4, which are encoded in the nuclear genome. The complex exists as a monomer or a dimer and forms supercomplexes (SCs) in the inner mitochondrial membrane with NADH-ubiquinone oxidoreductase (complex I, CI) and ubiquinol-cytochrome c oxidoreductase (cytochrome b-c1 complex, complex III, CIII), resulting in different assemblies (supercomplex SCI(1)III(2)IV(1) and megacomplex MCI(2)III(2)IV(2)).

The protein resides in the mitochondrion inner membrane. It functions in the pathway energy metabolism; oxidative phosphorylation. Component of the cytochrome c oxidase, the last enzyme in the mitochondrial electron transport chain which drives oxidative phosphorylation. The respiratory chain contains 3 multisubunit complexes succinate dehydrogenase (complex II, CII), ubiquinol-cytochrome c oxidoreductase (cytochrome b-c1 complex, complex III, CIII) and cytochrome c oxidase (complex IV, CIV), that cooperate to transfer electrons derived from NADH and succinate to molecular oxygen, creating an electrochemical gradient over the inner membrane that drives transmembrane transport and the ATP synthase. Cytochrome c oxidase is the component of the respiratory chain that catalyzes the reduction of oxygen to water. Electrons originating from reduced cytochrome c in the intermembrane space (IMS) are transferred via the dinuclear copper A center (CU(A)) of subunit 2 and heme A of subunit 1 to the active site in subunit 1, a binuclear center (BNC) formed by heme A3 and copper B (CU(B)). The BNC reduces molecular oxygen to 2 water molecules using 4 electrons from cytochrome c in the IMS and 4 protons from the mitochondrial matrix. This is Cytochrome c oxidase subunit 5A-2, mitochondrial from Thunnus obesus (Bigeye tuna).